The chain runs to 660 residues: MDSVNATAREAKESKISESEILESSIASATQGVLGFQQSDGHWVFELEADCTIPAEYVLLRHYLAEPVDTVLEAKIGNYLRRVQGAHGGWPLVHDGEFDMSASVKAYFALKMIGDSIDAPHMVRAREAIHARGGAIHSNVFTRFMLAMFGIVTWRAVPVLPIEIMLLPFWSPFHINKISYWARTTMVPLMVIAALKPRAKNPKGVGIDELFLQDPRSIGMTAKAPHQSMAWFLLFRSLDAILRVIEPLFPKSLRKRAIDTALAFSEERLNGEDGMGAIYPPMANLVMMYDALGKDENYPPRAVTRRGIDKLLVIGDDEAYCQPCVSPVWDTTLTAHALLEAGGDKAVPAAKHGLDWLIPKQELEVKGDWAVKRPDVRPGGWAFQYNNAYYPDLDDTAVVVMSMDRMRREHGVTGYDSAIDRGREWIEGMQSDDGGWAAFDVNNLEYYLNNIPFSDHGALLDPPTEDVTARCVSMLAQLGETAKTSKHVADGVAYLRKTQHPEGSWYGRWGMNFIYGTWSVLCALNMAGVRHDDPMIRKAADWLASIQNKDGGWGEDAVSYRLDYKGWEAAPSTASQTAWALLALMAAGEVDHPAVARGVEYLIATQNEKGLWDEQRYTATGFPRVFYLRYHGYSKFFPLWALARYRNLRNTNSRVVGVGM.

Residues E73 to G114 form a PFTB 1 repeat. Residue D394 is the Proton donor of the active site. PFTB repeat units follow at residues I419–L460 and I536–A586.

Belongs to the terpene cyclase/mutase family.

The protein localises to the cell membrane. The catalysed reaction is squalene = hop-22(29)-ene. The enzyme catalyses squalene + H2O = hopan-22-ol. Its pathway is secondary metabolite biosynthesis; hopanoid biosynthesis. Its function is as follows. Catalyzes the cyclization of squalene into hopene. This is Squalene--hopene cyclase (shc) from Bradyrhizobium diazoefficiens (strain JCM 10833 / BCRC 13528 / IAM 13628 / NBRC 14792 / USDA 110).